Here is a 177-residue protein sequence, read N- to C-terminus: Small ribosomal subunit protein uS4 (177 aa).

The S4 RNA-binding domain occupies 104-166; that stretch reads RRLQTIVYKK…PTSPFKQHPP (63 aa). Residues 158 to 177 are disordered; that stretch reads TSPFKQHPPTQQGEENVQQA. Residues 165–177 are compositionally biased toward polar residues; sequence PPTQQGEENVQQA.

Belongs to the universal ribosomal protein uS4 family. In terms of assembly, part of the 30S ribosomal subunit. Contacts protein S5. The interaction surface between S4 and S5 is involved in control of translational fidelity.

Functionally, one of the primary rRNA binding proteins, it binds directly to 16S rRNA where it nucleates assembly of the body of the 30S subunit. In terms of biological role, with S5 and S12 plays an important role in translational accuracy. The chain is Small ribosomal subunit protein uS4 from Sulfurisphaera tokodaii (strain DSM 16993 / JCM 10545 / NBRC 100140 / 7) (Sulfolobus tokodaii).